Reading from the N-terminus, the 258-residue chain is Small ribosomal subunit protein uS2 (258 aa).

Positions lysine 226–aspartate 258 are disordered. Residues aspartate 244–aspartate 258 show a composition bias toward acidic residues.

The protein belongs to the universal ribosomal protein uS2 family.

The chain is Small ribosomal subunit protein uS2 from Lactobacillus acidophilus (strain ATCC 700396 / NCK56 / N2 / NCFM).